Here is a 210-residue protein sequence, read N- to C-terminus: MLAGLSPHLSNLRRSLTQVLNFALVLSTAFMMWKGLSIYTNSSSPIVVVLSGSMEPAFQRGDLLFLWNRSPRAEVGEIVVYNVRGKDIPIVHRVVRAFGDDEKSPKETNGQKKKKVMSSGKKDSIAAGALHSDSALVSHRILTKGDNNIADDTELYAQGQDYLDRKLDLVGSVRGYIPAVGYVTIMLSEHPWLKTVLLGIMGAMVILQRE.

The Cytoplasmic portion of the chain corresponds to 1–21 (MLAGLSPHLSNLRRSLTQVLN). Residues 22-38 (FALVLSTAFMMWKGLSI) traverse the membrane as a helical; Signal-anchor for type II membrane protein segment. The Lumenal portion of the chain corresponds to 39–210 (YTNSSSPIVV…MGAMVILQRE (172 aa)). The N-linked (GlcNAc...) asparagine glycan is linked to Asn41. Catalysis depends on charge relay system residues Ser53, His92, and Asp152. The segment at 196–207 (VLLGIMGAMVIL) is C-terminal short (CTS) helix.

The protein belongs to the peptidase S26B family. Component of the signal peptidase complex (SPC) composed of a catalytic subunit SEC11 and three accessory subunits SPC1, SPC2 and SPC3. The complex induces a local thinning of the ER membrane which is used to measure the length of the signal peptide (SP) h-region of protein substrates. This ensures the selectivity of the complex towards h-regions shorter than 18-20 amino acids. SPC associates with the translocon complex.

The protein resides in the endoplasmic reticulum membrane. The catalysed reaction is Cleavage of hydrophobic, N-terminal signal or leader sequences from secreted and periplasmic proteins.. In terms of biological role, catalytic component of the signal peptidase complex (SPC) which catalyzes the cleavage of N-terminal signal sequences from nascent proteins as they are translocated into the lumen of the endoplasmic reticulum. Specifically cleaves N-terminal signal peptides that contain a hydrophobic alpha-helix (h-region) shorter than 18-20 amino acids. The sequence is that of Signal peptidase complex catalytic subunit SEC11 (SEC11) from Coccidioides posadasii (strain RMSCC 757 / Silveira) (Valley fever fungus).